Here is a 147-residue protein sequence, read N- to C-terminus: Large ribosomal subunit protein bL9 (147 aa).

The interval 40–60 is disordered; that stretch reads TTGNLKQHEAHERKAAEEAKQ. The segment covering 45 to 59 has biased composition (basic and acidic residues); sequence KQHEAHERKAAEEAK.

Belongs to the bacterial ribosomal protein bL9 family.

Binds to the 23S rRNA. This is Large ribosomal subunit protein bL9 from Exiguobacterium sibiricum (strain DSM 17290 / CCUG 55495 / CIP 109462 / JCM 13490 / 255-15).